Here is a 408-residue protein sequence, read N- to C-terminus: Intracellular coagulation inhibitor 2 (408 aa).

The first 22 residues, 1–22 (MLSRRTLDCCLVMLIVSTTFCQ), serve as a signal peptide directing secretion. Residues Cys50 and Cys249 are joined by a disulfide bond. An N-linked (GlcNAc...) asparagine glycan is attached at Asn174.

The protein belongs to the serpin family. Monomer. Forms a covalent heterodimer with clotting factor C chain B. Forms a covalent heterodimer with proclotting enzyme heavy chain. Specifically expressed in hemocytes (at protein level).

It is found in the secreted. Its function is as follows. Serine protease inhibitor that inhibits proclotting enzyme and to a lesser extent clotting factor C and clotting factor G. The chain is Intracellular coagulation inhibitor 2 from Tachypleus tridentatus (Japanese horseshoe crab).